Consider the following 284-residue polypeptide: Trimeric intracellular cation channel type B-A (284 aa).

Over 1 to 15 (MESLSELSVQFSQLS) the chain is Lumenal. The helical transmembrane segment at 16–33 (MFPFFDMAHYVVSVMSAR) threads the bilayer. Residues 34–46 (EQAGALDIAARSP) are Cytoplasmic-facing. The chain crosses the membrane as a helical span at residues 47–68 (MASWFSAMLYCFGGGILSSILL). The Lumenal portion of the chain corresponds to 69–79 (AEPPIAVLSNT). Residues 80–99 (TNIMLASTIWYMVYYFPYDL) form a helical membrane-spanning segment. Residues 100–102 (FYN) lie on the Cytoplasmic side of the membrane. A helical membrane pass occupies residues 103 to 121 (CFFFLPIRLIIAGMKEVTR). A 1,2-diacyl-sn-glycero-3-phospho-(1D-myo-inositol-4,5-bisphosphate)-binding residues include Lys-117 and Arg-121. Over 122–137 (TWKILSGVTHAHSHYK) the chain is Lumenal. A helical membrane pass occupies residues 138–155 (DALLVMITIGWARGAGGG). Over 156-177 (LISNFEQLVRGVWKPESNEFLK) the chain is Cytoplasmic. The helical transmembrane segment at 178-195 (MSYPVKVTLIGAVLFTLQ) threads the bilayer. The Lumenal portion of the chain corresponds to 196 to 206 (HGHYLPISRHN). The chain crosses the membrane as a helical span at residues 207-224 (LMLIYTMFLVLIKVTMML). Residues 225-284 (THSTASPFLPLETPLQRILFGQRQKPSEVRQSASSSGAKGKPSKKTLDKDSGEQSKKKDS) lie on the Cytoplasmic side of the membrane. A disordered region spans residues 246-284 (QRQKPSEVRQSASSSGAKGKPSKKTLDKDSGEQSKKKDS). Basic and acidic residues predominate over residues 269-284 (KTLDKDSGEQSKKKDS).

This sequence belongs to the TMEM38 family. As to quaternary structure, homotrimer; conformation seems to be controled by binding to diacylglycerol (DAG).

It localises to the endoplasmic reticulum membrane. It catalyses the reaction K(+)(in) = K(+)(out). Channel activity is activated by increased cytosolic Ca(2+) levels and blocked by luminal high Ca(2+) levels. Functionally, intracellular monovalent cation channel required for maintenance of rapid intracellular calcium release. Acts as a potassium counter-ion channel that functions in synchronization with calcium release from intracellular stores. Activated by increased cytosolic Ca(2+) levels. The protein is Trimeric intracellular cation channel type B-A (tmem38b-a) of Xenopus laevis (African clawed frog).